A 208-amino-acid chain; its full sequence is MLNVDKLIIGFDNALRTLLAPAATLRPIPGKDLPENELSKIEKRESAALMRINHVGEVCAQALYQGQALTARNEQVRQALDQAAREETEHLAWTERRIAELGGHKSFLNPLWYGGSFALGLVAGVLGDKWNLGFLAETERQVEAHLADHLQRLPHQDVRSRAIVSQMKVDEACHATMAVSYGGGPLPVPIKAVMKFSSGIMTRTAYWV.

Residues Glu-57, Glu-87, His-90, Glu-139, Glu-171, and His-174 each contribute to the Fe cation site.

This sequence belongs to the COQ7 family. The cofactor is Fe cation.

It localises to the cell membrane. It carries out the reaction a 5-methoxy-2-methyl-3-(all-trans-polyprenyl)benzene-1,4-diol + AH2 + O2 = a 3-demethylubiquinol + A + H2O. The protein operates within cofactor biosynthesis; ubiquinone biosynthesis. Functionally, catalyzes the hydroxylation of 2-nonaprenyl-3-methyl-6-methoxy-1,4-benzoquinol during ubiquinone biosynthesis. This chain is 3-demethoxyubiquinol 3-hydroxylase, found in Nitrosomonas eutropha (strain DSM 101675 / C91 / Nm57).